The primary structure comprises 176 residues: Large ribosomal subunit protein eL20 (176 aa).

A Glycyl lysine isopeptide (Lys-Gly) (interchain with G-Cter in SUMO2) cross-link involves residue Lys-11. Tyr-63 is subject to Phosphotyrosine. The residue at position 71 (Ser-71) is a Phosphoserine. Residue Lys-76 is modified to N6-succinyllysine. A Phosphoserine modification is found at Ser-123. Glycyl lysine isopeptide (Lys-Gly) (interchain with G-Cter in SUMO2) cross-links involve residues Lys-128 and Lys-170.

It belongs to the eukaryotic ribosomal protein eL20 family. In terms of assembly, component of the large ribosomal subunit. Binds IPO9 with high affinity.

The protein localises to the cytoplasm. Component of the large ribosomal subunit. The ribosome is a large ribonucleoprotein complex responsible for the synthesis of proteins in the cell. The chain is Large ribosomal subunit protein eL20 (Rpl18a) from Mus musculus (Mouse).